The chain runs to 397 residues: Odorant receptor 22b (397 aa).

The Cytoplasmic portion of the chain corresponds to Met1–Lys49. The helical transmembrane segment at Leu50–Glu70 threads the bilayer. The Extracellular portion of the chain corresponds to Tyr71–Ser85. A helical transmembrane segment spans residues Ser86 to Met105. Residues Gly106 to Cys143 lie on the Cytoplasmic side of the membrane. The helical transmembrane segment at Tyr144 to Met164 threads the bilayer. Residues Lys165 to Arg194 are Extracellular-facing. Residues Gly195–Ala215 traverse the membrane as a helical segment. The Cytoplasmic portion of the chain corresponds to Arg216–Thr268. Residues Ile269–Phe289 form a helical membrane-spanning segment. The Extracellular segment spans residues Phe290–Thr295. A helical transmembrane segment spans residues Gly296 to Leu316. Topologically, residues Cys317 to Leu347 are cytoplasmic. A helical transmembrane segment spans residues Val348 to Ile368. At Ser369–Gln397 the chain is on the extracellular side.

This sequence belongs to the insect chemoreceptor superfamily. Heteromeric odorant receptor channel (TC 1.A.69) family. Or2a subfamily. Interacts with Orco, via conserved C-terminal cytoplasmic loops. Complexes exist early in the endomembrane system in olfactory sensory neurons (OSNs), coupling these complexes to the conserved ciliary trafficking pathway. In terms of tissue distribution, expressed with Orco in 20-22 sensory neurons on the medial-proximal edge of the antenna. This expression pattern matches the distribution of the large sensilla basiconica. Expression is first seen at 60 hours APF in a subset of cells restricted to a subregion of the developing antenna. Expression continues throughout antennal development. Expressed in the ab3A neuron which responds to ethyl butyrate.

The protein localises to the cell membrane. In terms of biological role, odorant receptor which mediates acceptance or avoidance behavior, depending on its substrates. The odorant receptor repertoire encodes a large collection of odor stimuli that vary widely in identity, intensity, and duration. Involved in the behavioral responses to esters. Complexes with Orco to form odorant-sensing units, providing sensitive and prolonged odorant signaling and calcium permeability. They are necessary and sufficient to promote functional reconstitution of odor-evoked signaling in sensory neurons that normally respond only to carbon dioxide. The chain is Odorant receptor 22b (Or22b) from Drosophila melanogaster (Fruit fly).